Reading from the N-terminus, the 48-residue chain is Large ribosomal subunit protein bL33B (48 aa).

The protein belongs to the bacterial ribosomal protein bL33 family.

This chain is Large ribosomal subunit protein bL33B (rpmG2), found in Mycoplasma pneumoniae (strain ATCC 29342 / M129 / Subtype 1) (Mycoplasmoides pneumoniae).